Reading from the N-terminus, the 1939-residue chain is Myosin-4 (1939 aa).

The Myosin N-terminal SH3-like domain maps to 33–82 (DAKSSVFVVDAKESYVKATVQSREGGKVTAKTEGGATVTVKEDQVFSMNP). Phosphoserine is present on Ser36. 2 positions are modified to phosphothreonine: Thr64 and Thr69. A Phosphoserine modification is found at Ser79. Positions 86–782 (DKIEDMAMMT…LLGTLEEMRD (697 aa)) constitute a Myosin motor domain. At Lys130 the chain carries N6,N6,N6-trimethyllysine. Position 179–186 (179–186 (GESGAGKT)) interacts with ATP. A Phosphotyrosine modification is found at Tyr389. A Phosphothreonine modification is found at Thr391. At Ser392 the chain carries Phosphoserine. Phosphothreonine is present on Thr419. Phosphotyrosine is present on Tyr424. Ser625 carries the phosphoserine modification. The tract at residues 659–681 (LNKLMTNLKSTHPHFVRCLIPNE) is actin-binding. His757 carries the pros-methylhistidine modification. The segment at 761-775 (KFGHTKVFFKAGLLG) is actin-binding. The residue at position 776 (Thr776) is a Phosphothreonine. The IQ domain occupies 785-814 (LAQLITRTQAVCRGYLMRVEFRKMMERRES). Residues 843–1939 (LLKSAETEKE…EVHTKVISEE (1097 aa)) adopt a coiled-coil conformation. Residues Ser1092 and Ser1096 each carry the phosphoserine modification. Disordered regions lie at residues 1128 to 1147 (AERA…SREL) and 1153 to 1172 (RLEE…KKRE). A phosphoserine mark is found at Ser1162 and Ser1237. At Thr1241 the chain carries Phosphothreonine. Phosphoserine is present on Ser1243. Position 1255 is a phosphothreonine (Thr1255). Ser1261 bears the Phosphoserine mark. Thr1265 is subject to Phosphothreonine. A Phosphoserine modification is found at Ser1278. Thr1286 carries the phosphothreonine modification. A phosphoserine mark is found at Ser1288, Ser1292, Ser1303, Ser1306, and Ser1413. Phosphotyrosine is present on Tyr1464. Thr1467 is subject to Phosphothreonine. At Ser1474 the chain carries Phosphoserine. The residue at position 1492 (Tyr1492) is a Phosphotyrosine. At Ser1495 the chain carries Phosphoserine. At Thr1501 the chain carries Phosphothreonine. A Phosphoserine modification is found at Ser1514. Thr1517 bears the Phosphothreonine mark. A phosphoserine mark is found at Ser1542, Ser1547, Ser1554, Ser1574, Ser1600, Ser1603, Ser1714, and Ser1726. Residues Thr1730 and Thr1736 each carry the phosphothreonine modification. A Phosphoserine modification is found at Ser1739.

This sequence belongs to the TRAFAC class myosin-kinesin ATPase superfamily. Myosin family. Muscle myosin is a hexameric protein that consists of 2 heavy chain subunits (MHC), 2 alkali light chain subunits (MLC) and 2 regulatory light chain subunits (MLC-2).

The protein localises to the cytoplasm. The protein resides in the myofibril. Its function is as follows. Muscle contraction. In Rattus norvegicus (Rat), this protein is Myosin-4.